Consider the following 447-residue polypeptide: GTPase Der (447 aa).

EngA-type G domains are found at residues 4–165 and 180–357; these read KIIT…PEEE and LQIV…KIWN. GTP contacts are provided by residues 10 to 17, 57 to 61, 119 to 122, 186 to 193, 233 to 237, and 298 to 301; these read GRPNVGKS, DTPGL, NKCE, GRPNAGKS, DTAGL, and NKWD. In terms of domain architecture, KH-like spans 358 to 443; the sequence is KKITTSKLNE…PIRFTYVKTK (86 aa).

This sequence belongs to the TRAFAC class TrmE-Era-EngA-EngB-Septin-like GTPase superfamily. EngA (Der) GTPase family. Associates with the 50S ribosomal subunit.

GTPase that plays an essential role in the late steps of ribosome biogenesis. The chain is GTPase Der from Rickettsia felis (strain ATCC VR-1525 / URRWXCal2) (Rickettsia azadi).